The chain runs to 194 residues: Peptidyl-tRNA hydrolase (194 aa).

Y17 contributes to the tRNA binding site. The active-site Proton acceptor is the H22. F68, N70, and N116 together coordinate tRNA.

The protein belongs to the PTH family. Monomer.

It localises to the cytoplasm. The catalysed reaction is an N-acyl-L-alpha-aminoacyl-tRNA + H2O = an N-acyl-L-amino acid + a tRNA + H(+). Its function is as follows. Hydrolyzes ribosome-free peptidyl-tRNAs (with 1 or more amino acids incorporated), which drop off the ribosome during protein synthesis, or as a result of ribosome stalling. Catalyzes the release of premature peptidyl moieties from peptidyl-tRNA molecules trapped in stalled 50S ribosomal subunits, and thus maintains levels of free tRNAs and 50S ribosomes. The chain is Peptidyl-tRNA hydrolase from Haemophilus ducreyi (strain 35000HP / ATCC 700724).